A 232-amino-acid polypeptide reads, in one-letter code: uncharacterized protein (232 aa).

A run of 5 helical transmembrane segments spans residues leucine 4–glutamate 24, valine 42–leucine 62, leucine 100–methionine 120, leucine 145–leucine 165, and glycine 171–phenylalanine 191.

The protein resides in the cell membrane. This is an uncharacterized protein from Aquifex aeolicus (strain VF5).